The sequence spans 441 residues: Chromosomal replication initiator protein DnaA (441 aa).

The tract at residues 1-80 (MQNDVLARWE…MHQEISLQFI (80 aa)) is domain I, interacts with DnaA modulators. Residues 80–102 (ILAGQEVDQPKPKERSSEETYIN) are domain II. A domain III, AAA+ region region spans residues 103 to 320 (ILNPRYTFDT…GALIRVSAFS (218 aa)). ATP is bound by residues Gly-147, Gly-149, Lys-150, and Thr-151. Positions 321–441 (SLEQRDATPQ…IKELKKRIGE (121 aa)) are domain IV, binds dsDNA.

This sequence belongs to the DnaA family. As to quaternary structure, oligomerizes as a right-handed, spiral filament on DNA at oriC.

It localises to the cytoplasm. In terms of biological role, plays an essential role in the initiation and regulation of chromosomal replication. ATP-DnaA binds to the origin of replication (oriC) to initiate formation of the DNA replication initiation complex once per cell cycle. Binds the DnaA box (a 9 base pair repeat at the origin) and separates the double-stranded (ds)DNA. Forms a right-handed helical filament on oriC DNA; dsDNA binds to the exterior of the filament while single-stranded (ss)DNA is stabiized in the filament's interior. The ATP-DnaA-oriC complex binds and stabilizes one strand of the AT-rich DNA unwinding element (DUE), permitting loading of DNA polymerase. After initiation quickly degrades to an ADP-DnaA complex that is not apt for DNA replication. Binds acidic phospholipids. The protein is Chromosomal replication initiator protein DnaA of Desulforamulus reducens (strain ATCC BAA-1160 / DSM 100696 / MI-1) (Desulfotomaculum reducens).